Consider the following 159-residue polypeptide: Ribosomal RNA large subunit methyltransferase H (159 aa).

S-adenosyl-L-methionine is bound by residues Gly108 and 127-132; that span reads FSKMTF.

Belongs to the RNA methyltransferase RlmH family. Homodimer.

Its subcellular location is the cytoplasm. It catalyses the reaction pseudouridine(1915) in 23S rRNA + S-adenosyl-L-methionine = N(3)-methylpseudouridine(1915) in 23S rRNA + S-adenosyl-L-homocysteine + H(+). Its function is as follows. Specifically methylates the pseudouridine at position 1915 (m3Psi1915) in 23S rRNA. The chain is Ribosomal RNA large subunit methyltransferase H from Clostridium perfringens (strain ATCC 13124 / DSM 756 / JCM 1290 / NCIMB 6125 / NCTC 8237 / Type A).